Here is a 464-residue protein sequence, read N- to C-terminus: Argininosuccinate lyase (464 aa).

This sequence belongs to the lyase 1 family. Argininosuccinate lyase subfamily.

The protein resides in the cytoplasm. The enzyme catalyses 2-(N(omega)-L-arginino)succinate = fumarate + L-arginine. It participates in amino-acid biosynthesis; L-arginine biosynthesis; L-arginine from L-ornithine and carbamoyl phosphate: step 3/3. The sequence is that of Argininosuccinate lyase from Pseudomonas putida (strain GB-1).